The following is a 115-amino-acid chain: Large ribosomal subunit protein bL19 (115 aa).

It belongs to the bacterial ribosomal protein bL19 family.

This protein is located at the 30S-50S ribosomal subunit interface and may play a role in the structure and function of the aminoacyl-tRNA binding site. In Koribacter versatilis (strain Ellin345), this protein is Large ribosomal subunit protein bL19.